Consider the following 393-residue polypeptide: Proteasome-activating nucleotidase (393 aa).

A coiled-coil region spans residues 14–53 (SDEVQLVRLLEEKIKSLQIEIENLRKELNYYKAEMEKMLS). Residues 178-183 (GTGKTM) and tyrosine 317 contribute to the ATP site. A docks into pockets in the proteasome alpha-ring to cause gate opening region spans residues 391–393 (KYS).

It belongs to the AAA ATPase family. As to quaternary structure, homohexamer. The hexameric complex has a two-ring architecture resembling a top hat that caps the 20S proteasome core at one or both ends. Upon ATP-binding, the C-terminus of PAN interacts with the alpha-rings of the proteasome core by binding to the intersubunit pockets.

It is found in the cytoplasm. Functionally, ATPase which is responsible for recognizing, binding, unfolding and translocation of substrate proteins into the archaeal 20S proteasome core particle. Is essential for opening the gate of the 20S proteasome via an interaction with its C-terminus, thereby allowing substrate entry and access to the site of proteolysis. Thus, the C-termini of the proteasomal ATPase function like a 'key in a lock' to induce gate opening and therefore regulate proteolysis. Unfolding activity requires energy from ATP hydrolysis, whereas ATP binding alone promotes ATPase-20S proteasome association which triggers gate opening, and supports translocation of unfolded substrates. This Saccharolobus islandicus (strain Y.N.15.51 / Yellowstone #2) (Sulfolobus islandicus) protein is Proteasome-activating nucleotidase.